A 186-amino-acid polypeptide reads, in one-letter code: Riboflavin kinase (186 aa).

Positions 42 and 44 each coordinate Mg(2+). Glutamate 123 serves as the catalytic Nucleophile.

It belongs to the flavokinase family. It depends on Zn(2+) as a cofactor. Mg(2+) serves as cofactor.

The enzyme catalyses riboflavin + ATP = FMN + ADP + H(+). The protein operates within cofactor biosynthesis; FMN biosynthesis; FMN from riboflavin (ATP route): step 1/1. Its function is as follows. Catalyzes the phosphorylation of riboflavin (vitamin B2) to form flavin mononucleotide (FMN) coenzyme. This chain is Riboflavin kinase (FMN1), found in Eremothecium gossypii (strain ATCC 10895 / CBS 109.51 / FGSC 9923 / NRRL Y-1056) (Yeast).